The following is a 230-amino-acid chain: Antiholin-like protein LrgB (230 aa).

Transmembrane regions (helical) follow at residues 5–25 (MTPY…TLLF), 30–50 (GFFL…FLKV), 61–81 (GGKM…IPLY), 92–112 (WQIL…VFIV), 149–169 (ITSF…ALFL), 177–197 (PIAK…AVGI), and 209–229 (IAVT…MPFI).

It belongs to the CidB/LrgB family. LrgB subfamily.

It localises to the cell membrane. Functionally, inhibits the expression or activity of extracellular murein hydrolases by interacting, possibly with LrgA, with the holin-like protein CidA. The LrgAB and CidA proteins may affect the proton motive force of the membrane. May be involved in programmed cell death (PCD), possibly triggering PCD in response to antibiotics and environmental stresses. This is Antiholin-like protein LrgB from Bacillus cereus (strain Q1).